Consider the following 551-residue polypeptide: Palmdelphin (551 aa).

Met-1 carries the post-translational modification N-acetylmethionine. The stretch at 12-106 forms a coiled coil; it reads QAITDKRKIQ…LQISANEEVI (95 aa). Lys-125 participates in a covalent cross-link: Glycyl lysine isopeptide (Lys-Gly) (interchain with G-Cter in SUMO2). 2 positions are modified to phosphoserine: Ser-135 and Ser-163. A Glycyl lysine isopeptide (Lys-Gly) (interchain with G-Cter in SUMO1); alternate cross-link involves residue Lys-178. Lys-178 participates in a covalent cross-link: Glycyl lysine isopeptide (Lys-Gly) (interchain with G-Cter in SUMO2); alternate. A compositionally biased stretch (basic and acidic residues) spans 247–258; that stretch reads ERNSKSPTEYHE. Residues 247-267 are disordered; it reads ERNSKSPTEYHEPVYANPFCR. Residue Thr-270 is modified to Phosphothreonine. Disordered stretches follow at residues 298–387 and 452–536; these read HESE…CSSP and EDDE…DPSL. Phosphoserine occurs at positions 322, 350, 371, 376, 385, and 386. Positions 484 to 495 are enriched in basic and acidic residues; sequence KRSEVSPHENTN. Residues Ser-498, Ser-515, and Ser-520 each carry the phosphoserine modification.

It belongs to the paralemmin family. As to quaternary structure, interacts with GLUL. In terms of processing, phosphorylated. Expressed in the brain and the spinal cord. Expressed in the anterior olfactory nucleus, the olfactory tubercle, the nucleus supraopticus, the nucleus of the lateral olfactory tract, the piriform cortex, the cortico-amygdaloid transition zone, the septofimbrial nucleus and the indusium griseum (at protein level).

It is found in the cytoplasm. Its subcellular location is the cell projection. It localises to the dendrite. The protein resides in the dendritic spine. This Rattus norvegicus (Rat) protein is Palmdelphin (Palmd).